The chain runs to 461 residues: Photosystem II CP43 reaction center protein (461 aa).

A propeptide spanning residues 1–2 (ME) is cleaved from the precursor. Threonine 3 is subject to N-acetylthreonine. Phosphothreonine is present on threonine 3. Helical transmembrane passes span 57–81 (LFEV…PHLA), 122–143 (LIGP…KDKN), 166–188 (KAMY…RIIT), 243–263 (QPWA…LSYS), and 279–300 (WFNN…ASQS). Glutamate 355 is a binding site for [CaMn4O5] cluster. A helical membrane pass occupies residues 435–459 (RARAAAAGFEKGIDRLTEPVLSLKP).

The protein belongs to the PsbB/PsbC family. PsbC subfamily. PSII is composed of 1 copy each of membrane proteins PsbA, PsbB, PsbC, PsbD, PsbE, PsbF, PsbH, PsbI, PsbJ, PsbK, PsbL, PsbM, PsbT, PsbX, PsbY, PsbZ, Psb30/Ycf12, at least 3 peripheral proteins of the oxygen-evolving complex and a large number of cofactors. It forms dimeric complexes. The cofactor is Binds multiple chlorophylls and provides some of the ligands for the Ca-4Mn-5O cluster of the oxygen-evolving complex. It may also provide a ligand for a Cl- that is required for oxygen evolution. PSII binds additional chlorophylls, carotenoids and specific lipids..

It localises to the plastid. The protein localises to the chloroplast thylakoid membrane. One of the components of the core complex of photosystem II (PSII). It binds chlorophyll and helps catalyze the primary light-induced photochemical processes of PSII. PSII is a light-driven water:plastoquinone oxidoreductase, using light energy to abstract electrons from H(2)O, generating O(2) and a proton gradient subsequently used for ATP formation. In Stigeoclonium helveticum (Green alga), this protein is Photosystem II CP43 reaction center protein.